We begin with the raw amino-acid sequence, 164 residues long: Transcription antitermination protein NusB (164 aa).

The disordered stretch occupies residues 144 to 164 (KNGRGLIDHTPPRAAKTDAKS). Over residues 149–164 (LIDHTPPRAAKTDAKS) the composition is skewed to basic and acidic residues.

It belongs to the NusB family.

Functionally, involved in transcription antitermination. Required for transcription of ribosomal RNA (rRNA) genes. Binds specifically to the boxA antiterminator sequence of the ribosomal RNA (rrn) operons. The polypeptide is Transcription antitermination protein NusB (Chlorobium phaeovibrioides (strain DSM 265 / 1930) (Prosthecochloris vibrioformis (strain DSM 265))).